A 104-amino-acid chain; its full sequence is Large ribosomal subunit protein uL24 (104 aa).

This sequence belongs to the universal ribosomal protein uL24 family. Part of the 50S ribosomal subunit.

One of two assembly initiator proteins, it binds directly to the 5'-end of the 23S rRNA, where it nucleates assembly of the 50S subunit. Functionally, one of the proteins that surrounds the polypeptide exit tunnel on the outside of the subunit. This Pseudomonas aeruginosa (strain LESB58) protein is Large ribosomal subunit protein uL24.